A 470-amino-acid chain; its full sequence is Shutoff alkaline exonuclease (470 aa).

The protein belongs to the herpesviridae alkaline nuclease family. In terms of assembly, forms a complex with the DNA polymerase, the DNA polymerase processivity factor, and the major DNA binding protein.

It is found in the host nucleus. The protein localises to the host cytoplasm. Its function is as follows. Plays a role in processing non linear or branched viral DNA intermediates in order to promote the production of mature packaged unit-length linear progeny viral DNA molecules. Exhibits endonuclease and exonuclease activities and accepts both double-stranded and single-stranded DNA as substrate. Exonuclease digestion of DNA is in the 5'-&gt; 3' direction and the products are 5'-monophosphate nucleosides. Additionally, forms a recombinase with the major DNA-binding protein, which displays strand exchange activity. Also acts as a cytoplasmic RNA endonuclease that induces degradation of the majority of the cellular messenger RNAs during early lytic infection. The resulting inhibition of cellular protein synthesis serves to ensure maximal viral gene expression and evasion from host immune response. Internally cleaves host mRNAs which are then degraded by the cellular exonuclease XRN1. Bypasses therefore the regulatory steps of deadenylation and decapping normally required for XRN1 activation. The sequence is that of Shutoff alkaline exonuclease from Epstein-Barr virus (strain GD1) (HHV-4).